The chain runs to 225 residues: Histone H1 (225 aa).

The segment at methionine 1–threonine 20 is disordered. Positions proline 23 to lysine 94 constitute an H15 domain. A disordered region spans residues lysine 95 to valine 147. The segment covering alanine 107–lysine 127 has biased composition (basic residues). The segment covering alanine 128–valine 147 has biased composition (low complexity).

It belongs to the histone H1/H5 family.

It localises to the nucleus. The protein localises to the chromosome. Its function is as follows. Could act as an H1-type linker histone. In Eremothecium gossypii (strain ATCC 10895 / CBS 109.51 / FGSC 9923 / NRRL Y-1056) (Yeast), this protein is Histone H1 (HHOA).